Here is a 734-residue protein sequence, read N- to C-terminus: Photosystem I P700 chlorophyll a apoprotein A2 (734 aa).

8 helical membrane-spanning segments follow: residues Ile-46 to Ala-69, Leu-135 to Gln-158, Leu-175 to Ile-199, Val-273 to Tyr-291, Ile-330 to Tyr-353, Ala-369 to Ile-395, Ala-417 to His-439, and Phe-517 to Val-535. Residues Cys-559 and Cys-568 each contribute to the [4Fe-4S] cluster site. 2 consecutive transmembrane segments (helical) span residues Asp-575 to Trp-596 and Leu-643 to Ile-665. His-654, Met-662, and Tyr-670 together coordinate chlorophyll a. Phylloquinone is bound at residue Trp-671. The helical transmembrane segment at Leu-707–Ala-727 threads the bilayer.

This sequence belongs to the PsaA/PsaB family. The PsaA/B heterodimer binds the P700 chlorophyll special pair and subsequent electron acceptors. PSI consists of a core antenna complex that captures photons, and an electron transfer chain that converts photonic excitation into a charge separation. The eukaryotic PSI reaction center is composed of at least 11 subunits. It depends on P700 is a chlorophyll a/chlorophyll a' dimer, A0 is one or more chlorophyll a, A1 is one or both phylloquinones and FX is a shared 4Fe-4S iron-sulfur center. as a cofactor.

It is found in the plastid. The protein localises to the chloroplast thylakoid membrane. The enzyme catalyses reduced [plastocyanin] + hnu + oxidized [2Fe-2S]-[ferredoxin] = oxidized [plastocyanin] + reduced [2Fe-2S]-[ferredoxin]. PsaA and PsaB bind P700, the primary electron donor of photosystem I (PSI), as well as the electron acceptors A0, A1 and FX. PSI is a plastocyanin-ferredoxin oxidoreductase, converting photonic excitation into a charge separation, which transfers an electron from the donor P700 chlorophyll pair to the spectroscopically characterized acceptors A0, A1, FX, FA and FB in turn. Oxidized P700 is reduced on the lumenal side of the thylakoid membrane by plastocyanin. The protein is Photosystem I P700 chlorophyll a apoprotein A2 of Pisum sativum (Garden pea).